Here is a 217-residue protein sequence, read N- to C-terminus: Small ribosomal subunit protein uS3 (217 aa).

The KH type-2 domain maps to 38 to 106 (IRKFINKELA…QVHINIIEIK (69 aa)).

It belongs to the universal ribosomal protein uS3 family. In terms of assembly, part of the 30S ribosomal subunit. Forms a tight complex with proteins S10 and S14.

Its function is as follows. Binds the lower part of the 30S subunit head. Binds mRNA in the 70S ribosome, positioning it for translation. The polypeptide is Small ribosomal subunit protein uS3 (Streptococcus pyogenes serotype M6 (strain ATCC BAA-946 / MGAS10394)).